The following is a 66-amino-acid chain: Large ribosomal subunit protein bL31 (66 aa).

4 residues coordinate Zn(2+): Cys-16, Cys-18, Cys-36, and Cys-39.

Belongs to the bacterial ribosomal protein bL31 family. Type A subfamily. As to quaternary structure, part of the 50S ribosomal subunit. Zn(2+) serves as cofactor.

Its function is as follows. Binds the 23S rRNA. This is Large ribosomal subunit protein bL31 from Nitratiruptor sp. (strain SB155-2).